The primary structure comprises 613 residues: tRNA 5-methylaminomethyl-2-thiouridine biosynthesis bifunctional protein MnmC (613 aa).

The tract at residues 1-225 (MKKAKLIFKD…KREMIKAYLE (225 aa)) is tRNA (mnm(5)s(2)U34)-methyltransferase. Positions 252 to 613 (IGAGISSAVL…FLIRKLKKGL (362 aa)) are FAD-dependent cmnm(5)s(2)U34 oxidoreductase.

In the N-terminal section; belongs to the methyltransferase superfamily. tRNA (mnm(5)s(2)U34)-methyltransferase family. It in the C-terminal section; belongs to the DAO family. The cofactor is FAD.

It is found in the cytoplasm. It catalyses the reaction 5-aminomethyl-2-thiouridine(34) in tRNA + S-adenosyl-L-methionine = 5-methylaminomethyl-2-thiouridine(34) in tRNA + S-adenosyl-L-homocysteine + H(+). In terms of biological role, catalyzes the last two steps in the biosynthesis of 5-methylaminomethyl-2-thiouridine (mnm(5)s(2)U) at the wobble position (U34) in tRNA. Catalyzes the FAD-dependent demodification of cmnm(5)s(2)U34 to nm(5)s(2)U34, followed by the transfer of a methyl group from S-adenosyl-L-methionine to nm(5)s(2)U34, to form mnm(5)s(2)U34. The chain is tRNA 5-methylaminomethyl-2-thiouridine biosynthesis bifunctional protein MnmC from Campylobacter jejuni subsp. jejuni serotype O:6 (strain 81116 / NCTC 11828).